The primary structure comprises 333 residues: Ketol-acid reductoisomerase (NADP(+)) (333 aa).

The KARI N-terminal Rossmann domain maps to 1-179 (MFYDDDADLS…GGTRAGVIKT (179 aa)). NADP(+)-binding positions include 22–25 (YGSQ), K45, S48, S50, and 80–83 (DTAQ). H105 is a catalytic residue. G131 is a binding site for NADP(+). In terms of domain architecture, KARI C-terminal knotted spans 180–325 (TFKDETETDL…KKLRDLMSWV (146 aa)). Mg(2+) contacts are provided by D188, E192, E224, and E228. S249 is a substrate binding site.

The protein belongs to the ketol-acid reductoisomerase family. Mg(2+) serves as cofactor.

It carries out the reaction (2R)-2,3-dihydroxy-3-methylbutanoate + NADP(+) = (2S)-2-acetolactate + NADPH + H(+). The catalysed reaction is (2R,3R)-2,3-dihydroxy-3-methylpentanoate + NADP(+) = (S)-2-ethyl-2-hydroxy-3-oxobutanoate + NADPH + H(+). The protein operates within amino-acid biosynthesis; L-isoleucine biosynthesis; L-isoleucine from 2-oxobutanoate: step 2/4. Its pathway is amino-acid biosynthesis; L-valine biosynthesis; L-valine from pyruvate: step 2/4. In terms of biological role, involved in the biosynthesis of branched-chain amino acids (BCAA). Catalyzes an alkyl-migration followed by a ketol-acid reduction of (S)-2-acetolactate (S2AL) to yield (R)-2,3-dihydroxy-isovalerate. In the isomerase reaction, S2AL is rearranged via a Mg-dependent methyl migration to produce 3-hydroxy-3-methyl-2-ketobutyrate (HMKB). In the reductase reaction, this 2-ketoacid undergoes a metal-dependent reduction by NADPH to yield (R)-2,3-dihydroxy-isovalerate. The chain is Ketol-acid reductoisomerase (NADP(+)) from Mycobacterium bovis (strain ATCC BAA-935 / AF2122/97).